The chain runs to 116 residues: U11-theraphotoxin-Hhn1b (116 aa).

The N-terminal stretch at 1-21 is a signal peptide; that stretch reads MNTVRVAFLLVFVLAVSLGQA. A propeptide spanning residues 22-74 is cleaved from the precursor; that stretch reads DKDENRMEMQEKTEQGKSYLDFAENLLLQKLEELEAKLLEEDSEESRNSRQKR. The disordered stretch occupies residues 61-83; sequence EEDSEESRNSRQKRCIGEGVPCD. Intrachain disulfides connect cysteine 75–cysteine 90, cysteine 82–cysteine 95, and cysteine 89–cysteine 110.

It belongs to the neurotoxin 14 (magi-1) family. 01 (HNTX-16) subfamily. In terms of tissue distribution, expressed by the venom gland.

It is found in the secreted. Probable ion channel inhibitor. The protein is U11-theraphotoxin-Hhn1b of Cyriopagopus hainanus (Chinese bird spider).